Consider the following 469-residue polypeptide: Ribulose bisphosphate carboxylase large chain (469 aa).

Residues 1-2 constitute a propeptide that is removed on maturation; that stretch reads MS. Pro3 carries the post-translational modification N-acetylproline. At Lys14 the chain carries N6,N6,N6-trimethyllysine. Asn123 and Thr173 together coordinate substrate. Lys175 acts as the Proton acceptor in catalysis. Lys177 is a binding site for substrate. Residues Lys201, Asp203, and Glu204 each contribute to the Mg(2+) site. At Lys201 the chain carries N6-carboxylysine. The active-site Proton acceptor is His294. Arg295, His327, and Ser379 together coordinate substrate.

The protein belongs to the RuBisCO large chain family. Type I subfamily. Heterohexadecamer of 8 large chains and 8 small chains; disulfide-linked. The disulfide link is formed within the large subunit homodimers. The cofactor is Mg(2+). In terms of processing, the disulfide bond which can form in the large chain dimeric partners within the hexadecamer appears to be associated with oxidative stress and protein turnover.

It localises to the plastid. The protein resides in the chloroplast. It carries out the reaction 2 (2R)-3-phosphoglycerate + 2 H(+) = D-ribulose 1,5-bisphosphate + CO2 + H2O. The catalysed reaction is D-ribulose 1,5-bisphosphate + O2 = 2-phosphoglycolate + (2R)-3-phosphoglycerate + 2 H(+). In terms of biological role, ruBisCO catalyzes two reactions: the carboxylation of D-ribulose 1,5-bisphosphate, the primary event in carbon dioxide fixation, as well as the oxidative fragmentation of the pentose substrate in the photorespiration process. Both reactions occur simultaneously and in competition at the same active site. The chain is Ribulose bisphosphate carboxylase large chain from Atriplex patula (Common orache).